Here is a 133-residue protein sequence, read N- to C-terminus: Large ribosomal subunit protein uL22 (133 aa).

Belongs to the universal ribosomal protein uL22 family. As to quaternary structure, part of the 50S ribosomal subunit.

Its function is as follows. This protein binds specifically to 23S rRNA; its binding is stimulated by other ribosomal proteins, e.g. L4, L17, and L20. It is important during the early stages of 50S assembly. It makes multiple contacts with different domains of the 23S rRNA in the assembled 50S subunit and ribosome. In terms of biological role, the globular domain of the protein is located near the polypeptide exit tunnel on the outside of the subunit, while an extended beta-hairpin is found that lines the wall of the exit tunnel in the center of the 70S ribosome. The polypeptide is Large ribosomal subunit protein uL22 (Granulibacter bethesdensis (strain ATCC BAA-1260 / CGDNIH1)).